Consider the following 352-residue polypeptide: Cobalt transport protein NhlF (352 aa).

8 consecutive transmembrane segments (helical) span residues 23–43 (LASVVGAIVILHVLGVALYLG), 46–66 (GNPAAAGGLAGSGVLAYVLGV), 95–115 (VGFFFAMGHSTVVVVLALVVA), 131–151 (EIGGLVATVVAVTFLSIVAGL), 206–226 (PVGLLMGLGLETASEVTLLTL), 230–250 (AATGGTLSIAAVLSLPLLFAA), 290–310 (VIGLFVAGIYVCALLAHLPMF), and 323–343 (FEFLGYAVAAAFILTWTGALL).

This sequence belongs to the NiCoT transporter (TC 2.A.52) family.

It is found in the cell membrane. Cobalt uptake is inhibited by uncouplers (CCCP and 3,5-di-tert-butyl-4-hydroxybenzylidenemalononitrile) and by the addition of excess nickel. Functionally, mediates energy-dependent uptake of cobalt ions into the cell. Can also transport nickel ions, but cobalt is the preferred substrate. In Rhodococcus rhodochrous, this protein is Cobalt transport protein NhlF (nhlF).